Consider the following 520-residue polypeptide: Glutamate--cysteine ligase (520 aa).

Belongs to the glutamate--cysteine ligase type 1 family. Type 1 subfamily.

The catalysed reaction is L-cysteine + L-glutamate + ATP = gamma-L-glutamyl-L-cysteine + ADP + phosphate + H(+). The protein operates within sulfur metabolism; glutathione biosynthesis; glutathione from L-cysteine and L-glutamate: step 1/2. The polypeptide is Glutamate--cysteine ligase (Leptospira interrogans serogroup Icterohaemorrhagiae serovar copenhageni (strain Fiocruz L1-130)).